A 351-amino-acid chain; its full sequence is MSEDSQWLLDWPVSGGARAGRAELKTSPEDFRVTESLWPTREDDAAASGPVEVSGDGEHLCLRLEKTGDNTEYVARELAALAGCRSFDVGFCGLKDRHAVTVQWFSLYRPGQEADDQALMAEVGQRWPVRAAVRHSRKLRRGDHQANGFEIVLRNVTGQRELVEAGLERLASQGAPNYFGPQRFGFQGGNLDRAVQIDPSRLNRKRGRAGRSASKNVLYFSAARSWLFNQVLAERVSNRTWTEVLPGEPEPSGAGPTGPLWGDGGTLASGEQETLERGVVDACPGLARLFQSTRMKPERRPLVAHPGEFKWQWLDTTTLRVQFVLSPGQYATTVLGDLFELEDLSLSRDNK.

The Nucleophile role is filled by D96. One can recognise a TRUD domain in the interval 174–304 (GAPNYFGPQR…MKPERRPLVA (131 aa)). The disordered stretch occupies residues 244–268 (VLPGEPEPSGAGPTGPLWGDGGTLA).

It belongs to the pseudouridine synthase TruD family.

The catalysed reaction is uridine(13) in tRNA = pseudouridine(13) in tRNA. Its function is as follows. Responsible for synthesis of pseudouridine from uracil-13 in transfer RNAs. This chain is tRNA pseudouridine synthase D, found in Marinobacter nauticus (strain ATCC 700491 / DSM 11845 / VT8) (Marinobacter aquaeolei).